The primary structure comprises 596 residues: Probable protein phosphatase 2C 26 (596 aa).

The segment at 122 to 154 (SGPLDPAVPFSGPLPAKPPKPASSSSRGFSRRF) is disordered. The PPM-type phosphatase domain occupies 177–584 (LRRDDGVQWA…DDVTVMVISL (408 aa)). The Mn(2+) site is built by aspartate 212, glycine 213, aspartate 512, and aspartate 575.

This sequence belongs to the PP2C family. Mg(2+) serves as cofactor. Requires Mn(2+) as cofactor.

It catalyses the reaction O-phospho-L-seryl-[protein] + H2O = L-seryl-[protein] + phosphate. It carries out the reaction O-phospho-L-threonyl-[protein] + H2O = L-threonyl-[protein] + phosphate. In Oryza sativa subsp. japonica (Rice), this protein is Probable protein phosphatase 2C 26.